Reading from the N-terminus, the 410-residue chain is Class E basic helix-loop-helix protein 41 (410 aa).

Lys-31 participates in a covalent cross-link: Glycyl lysine isopeptide (Lys-Gly) (interchain with G-Cter in SUMO2). The bHLH domain maps to 44 to 99; the sequence is TYKLPHRLIEKKRRDRINECIAQLKDLLPEHLKLTTLGHLEKAVVLELTLKHLKAL. Residue Lys-121 forms a Glycyl lysine isopeptide (Lys-Gly) (interchain with G-Cter in SUMO2) linkage. One can recognise an Orange domain in the interval 131–166; it reads FHSGFQTCAKEVLQYLARFESWTPREPRCAQLVSHL. 2 disordered regions span residues 209–251 and 371–410; these read IQRT…SAAP and EVAP…KDAP. A Glycyl lysine isopeptide (Lys-Gly) (interchain with G-Cter in SUMO2) cross-link involves residue Lys-240.

As to quaternary structure, homodimer. Heterodimer with BHLHE40/DEC1. Interacts with CIART. Interacts with BMAL1 and RXRA. Interacts with NR0B2 and HNF1A. Highly expressed in the caudate putamen, pineal gland, granular cell layer of the cerebellum, olfactory bulb, piriform cortex, hippocampus and hypothalamic nuclei. Moderately expressed in skeletal muscle, heart. Weakly expressed in lung.

It is found in the nucleus. Its function is as follows. Transcriptional repressor involved in the regulation of the circadian rhythm by negatively regulating the activity of the clock genes and clock-controlled genes. Acts as the negative limb of a novel autoregulatory feedback loop (DEC loop) which differs from the one formed by the PER and CRY transcriptional repressors (PER/CRY loop). Both these loops are interlocked as it represses the expression of PER1 and in turn is repressed by PER1/2 and CRY1/2. Represses the activity of the circadian transcriptional activator: CLOCK-BMAL1 heterodimer by competing for the binding to E-box elements (5'-CACGTG-3') found within the promoters of its target genes. Negatively regulates its own expression and the expression of DBP and BHLHE41/DEC2. Acts as a corepressor of RXR and the RXR-LXR heterodimers and represses the ligand-induced RXRA/B/G, NR1H3/LXRA, NR1H4 and VDR transactivation activity. Inhibits HNF1A-mediated transactivation of CYP1A2, CYP2E1 and CYP3A11. The polypeptide is Class E basic helix-loop-helix protein 41 (Bhlhb3) (Rattus norvegicus (Rat)).